A 121-amino-acid chain; its full sequence is Small ribosomal subunit protein bS6 (121 aa).

Residues 94 to 121 (KAETGPSAVMKRVEKEEARKSSQQETAA) form a disordered region. The segment covering 104-115 (KRVEKEEARKSS) has biased composition (basic and acidic residues).

This sequence belongs to the bacterial ribosomal protein bS6 family.

Its function is as follows. Binds together with bS18 to 16S ribosomal RNA. In Leptothrix cholodnii (strain ATCC 51168 / LMG 8142 / SP-6) (Leptothrix discophora (strain SP-6)), this protein is Small ribosomal subunit protein bS6.